The sequence spans 248 residues: Pyridoxine 5'-phosphate synthase (248 aa).

Asn-12 contacts 3-amino-2-oxopropyl phosphate. Residue 14–15 participates in 1-deoxy-D-xylulose 5-phosphate binding; sequence DH. Arg-23 is a binding site for 3-amino-2-oxopropyl phosphate. His-48 (proton acceptor) is an active-site residue. Positions 50 and 55 each coordinate 1-deoxy-D-xylulose 5-phosphate. The active-site Proton acceptor is the Glu-75. Thr-105 contributes to the 1-deoxy-D-xylulose 5-phosphate binding site. Residue His-196 is the Proton donor of the active site. 3-amino-2-oxopropyl phosphate contacts are provided by residues Gly-197 and 218 to 219; that span reads GH.

The protein belongs to the PNP synthase family. As to quaternary structure, homooctamer; tetramer of dimers.

Its subcellular location is the cytoplasm. It catalyses the reaction 3-amino-2-oxopropyl phosphate + 1-deoxy-D-xylulose 5-phosphate = pyridoxine 5'-phosphate + phosphate + 2 H2O + H(+). Its pathway is cofactor biosynthesis; pyridoxine 5'-phosphate biosynthesis; pyridoxine 5'-phosphate from D-erythrose 4-phosphate: step 5/5. Its function is as follows. Catalyzes the complicated ring closure reaction between the two acyclic compounds 1-deoxy-D-xylulose-5-phosphate (DXP) and 3-amino-2-oxopropyl phosphate (1-amino-acetone-3-phosphate or AAP) to form pyridoxine 5'-phosphate (PNP) and inorganic phosphate. The polypeptide is Pyridoxine 5'-phosphate synthase (Pseudomonas aeruginosa (strain UCBPP-PA14)).